The primary structure comprises 419 residues: Probable pectate lyase C (419 aa).

The signal sequence occupies residues 1 to 19; it reads MRLGIALFSLIGLCHSVSA. N-linked (GlcNAc...) asparagine glycans are attached at residues Asn-48, Asn-164, and Asn-201. Arg-204 is a catalytic residue. In terms of domain architecture, EF-hand spans 261-296; the sequence is NEYFHGYVETNYYDPDRDGTLNGNELGVSASNYGGM. Ca(2+) is bound by residues Asp-274, Asp-276, Asp-278, Thr-280, and Glu-285. A disordered region spans residues 350 to 395; that stretch reads ELISDEASMGGPGDLDGGSPPTDSDGDGIPDDAETEIGSDPNTADS. Positions 373-386 are enriched in acidic residues; the sequence is SDGDGIPDDAETEI.

It belongs to the polysaccharide lyase 1 family. Ca(2+) is required as a cofactor.

The protein resides in the secreted. It carries out the reaction Eliminative cleavage of (1-&gt;4)-alpha-D-galacturonan to give oligosaccharides with 4-deoxy-alpha-D-galact-4-enuronosyl groups at their non-reducing ends.. In terms of biological role, pectinolytic enzyme consist of four classes of enzymes: pectin lyase, polygalacturonase, pectin methylesterase and rhamnogalacturonase. Among pectinolytic enzymes, pectin lyase is the most important in depolymerization of pectin, since it cleaves internal glycosidic bonds of highly methylated pectins. Favors pectate, the anion, over pectin, the methyl ester. This chain is Probable pectate lyase C (plyC), found in Aspergillus terreus (strain NIH 2624 / FGSC A1156).